The chain runs to 428 residues: D-amino acid dehydrogenase (428 aa).

3 to 17 is an FAD binding site; it reads VVILGSGVVGVASAY.

Belongs to the DadA oxidoreductase family. The cofactor is FAD.

It catalyses the reaction a D-alpha-amino acid + A + H2O = a 2-oxocarboxylate + AH2 + NH4(+). Its pathway is amino-acid degradation; D-alanine degradation; NH(3) and pyruvate from D-alanine: step 1/1. In terms of biological role, oxidative deamination of D-amino acids. This is D-amino acid dehydrogenase from Burkholderia multivorans (strain ATCC 17616 / 249).